A 92-amino-acid chain; its full sequence is Small ribosomal subunit protein uS19 (92 aa).

The protein belongs to the universal ribosomal protein uS19 family.

In terms of biological role, protein S19 forms a complex with S13 that binds strongly to the 16S ribosomal RNA. The polypeptide is Small ribosomal subunit protein uS19 (Chromobacterium violaceum (strain ATCC 12472 / DSM 30191 / JCM 1249 / CCUG 213 / NBRC 12614 / NCIMB 9131 / NCTC 9757 / MK)).